A 575-amino-acid chain; its full sequence is Isocitrate dehydrogenase kinase/phosphatase (575 aa).

ATP-binding positions include 315–321 (APGIRGM) and Lys-336. Asp-371 is a catalytic residue.

Belongs to the AceK family.

The protein localises to the cytoplasm. It carries out the reaction L-seryl-[isocitrate dehydrogenase] + ATP = O-phospho-L-seryl-[isocitrate dehydrogenase] + ADP + H(+). In terms of biological role, bifunctional enzyme which can phosphorylate or dephosphorylate isocitrate dehydrogenase (IDH) on a specific serine residue. This is a regulatory mechanism which enables bacteria to bypass the Krebs cycle via the glyoxylate shunt in response to the source of carbon. When bacteria are grown on glucose, IDH is fully active and unphosphorylated, but when grown on acetate or ethanol, the activity of IDH declines drastically concomitant with its phosphorylation. The chain is Isocitrate dehydrogenase kinase/phosphatase from Citrobacter koseri (strain ATCC BAA-895 / CDC 4225-83 / SGSC4696).